Consider the following 543-residue polypeptide: Chaperonin GroEL (543 aa).

ATP is bound by residues 29 to 32 (TLGP), 86 to 90 (DGTTT), Gly413, 477 to 479 (DAL), and Asp493.

It belongs to the chaperonin (HSP60) family. Forms a cylinder of 14 subunits composed of two heptameric rings stacked back-to-back. Interacts with the co-chaperonin GroES.

It localises to the cytoplasm. It carries out the reaction ATP + H2O + a folded polypeptide = ADP + phosphate + an unfolded polypeptide.. Functionally, together with its co-chaperonin GroES, plays an essential role in assisting protein folding. The GroEL-GroES system forms a nano-cage that allows encapsulation of the non-native substrate proteins and provides a physical environment optimized to promote and accelerate protein folding. The chain is Chaperonin GroEL from Clostridium botulinum.